A 119-amino-acid polypeptide reads, in one-letter code: Acidic phospholipase A2 2 (119 aa).

7 disulfide bridges follow: Cys-11/Cys-71, Cys-26/Cys-118, Cys-28/Cys-44, Cys-43/Cys-99, Cys-50/Cys-92, Cys-60/Cys-85, and Cys-78/Cys-90. Positions 27, 29, and 31 each coordinate Ca(2+). His-47 is a catalytic residue. Asp-48 serves as a coordination point for Ca(2+). Residue Asp-93 is part of the active site.

It belongs to the phospholipase A2 family. Group I subfamily. D49 sub-subfamily. As to quaternary structure, homotrimer. Ca(2+) serves as cofactor. In terms of tissue distribution, expressed by the venom gland.

The protein resides in the secreted. The enzyme catalyses a 1,2-diacyl-sn-glycero-3-phosphocholine + H2O = a 1-acyl-sn-glycero-3-phosphocholine + a fatty acid + H(+). Its function is as follows. PLA2 catalyzes the calcium-dependent hydrolysis of the 2-acyl groups in 3-sn-phosphoglycerides. This chain is Acidic phospholipase A2 2, found in Naja naja (Indian cobra).